We begin with the raw amino-acid sequence, 463 residues long: Argininosuccinate lyase (463 aa).

Positions 27, 115, and 161 each coordinate 2-(N(omega)-L-arginino)succinate. The active-site Proton acceptor is His-162. Catalysis depends on Ser-283, which acts as the Proton donor. Residues Asn-291, Tyr-323, Gln-328, and Lys-331 each contribute to the 2-(N(omega)-L-arginino)succinate site.

Belongs to the lyase 1 family. Argininosuccinate lyase subfamily. Homotetramer.

It carries out the reaction 2-(N(omega)-L-arginino)succinate = fumarate + L-arginine. Its pathway is amino-acid biosynthesis; L-arginine biosynthesis; L-arginine from L-ornithine and carbamoyl phosphate: step 3/3. The chain is Argininosuccinate lyase (ARG4) from Saccharomyces paradoxus (Yeast).